A 202-amino-acid polypeptide reads, in one-letter code: Josephin-1 (202 aa).

The disordered stretch occupies residues Met-1 to Ala-22. Position 15 is a phosphoserine (Ser-15). The 180-residue stretch at Pro-23–Val-202 folds into the Josephin domain. Catalysis depends on Cys-36, which acts as the Nucleophile. The Proton acceptor role is filled by His-139.

As to quaternary structure, interacts with beta-actin/ACTB. Post-translationally, monoubiquitinated. Ubiquitination activates deubiquitination activity in vitro. Widely expressed (at protein level).

Its subcellular location is the cell membrane. It localises to the cytoplasm. It catalyses the reaction Thiol-dependent hydrolysis of ester, thioester, amide, peptide and isopeptide bonds formed by the C-terminal Gly of ubiquitin (a 76-residue protein attached to proteins as an intracellular targeting signal).. Its function is as follows. Deubiquitinates monoubiquitinated probes (in vitro). When ubiquitinated, cleaves 'Lys-63'-linked and 'Lys-48'-linked poly-ubiquitin chains (in vitro), hence may act as a deubiquitinating enzyme. May increase macropinocytosis and suppress clathrin- and caveolae-mediated endocytosis. May enhance membrane dynamics and cell motility independently of its catalytic activity. The polypeptide is Josephin-1 (Josd1) (Mus musculus (Mouse)).